We begin with the raw amino-acid sequence, 453 residues long: Ankyrin repeat and SOCS box protein 16 (453 aa).

7 ANK repeats span residues C56 to M85, K110 to A139, G142 to V171, E175 to L204, S209 to L238, Q242 to A279, and K283 to V312. Residues Y398 to G450 enclose the SOCS box domain.

This sequence belongs to the ankyrin SOCS box (ASB) family.

Its pathway is protein modification; protein ubiquitination. Its function is as follows. May be a substrate-recognition component of a SCF-like ECS (Elongin-Cullin-SOCS-box protein) E3 ubiquitin-protein ligase complex which mediates the ubiquitination and subsequent proteasomal degradation of target proteins. This is Ankyrin repeat and SOCS box protein 16 (ASB16) from Homo sapiens (Human).